The sequence spans 870 residues: Pre-mRNA-processing factor 40 homolog B (870 aa).

WW domains are found at residues 92–125 and 133–166; these read GPPRALWSEHVAPDGRIYYYNADDKQSVWEKPSV and LLSQCPWKEYKSDTGKPYYYNNQSQESRWTRPKD. The interval 146–277 is disordered; sequence TGKPYYYNNQ…RSGLSWSNRE (132 aa). The residue at position 148 (Lys-148) is an N6-acetyllysine. A Glycyl lysine isopeptide (Lys-Gly) (interchain with G-Cter in SUMO2) cross-link involves residue Lys-175. The segment covering 182-191 has biased composition (low complexity); that stretch reads QQTQQLQTLQ. The segment covering 192–211 has biased composition (pro residues); it reads PQPPQPQPDPPPIPPGPIPV. FF domains follow at residues 276 to 330, 340 to 397, 410 to 470, 490 to 550, 554 to 610, and 625 to 682; these read REKA…YKAQ, RLRA…VLFF, RRRN…HIRA, QRKN…YVEE, RFHD…LLEK, and RMRR…FLQV. Positions 604–640 form a coiled coil; sequence FNSLLEKAEARETEREKEEARRMRRREAAFRSMLRQA. The interval 690–870 is disordered; the sequence is HLHTKGRKHG…TLLQQLDDHQ (181 aa). The segment covering 691-711 has biased composition (basic residues); that stretch reads LHTKGRKHGRKGKKHHRKRSH. 2 stretches are compositionally biased toward low complexity: residues 739–756 and 764–774; these read SESGSEPSSSLDSVESGG and SPSSHLLLGSD. Phosphoserine is present on Ser-764. Residues 778-794 show a composition bias toward basic residues; it reads RKTKKPKKKTKKRRHKS. Residues 804-824 show a composition bias toward basic and acidic residues; the sequence is EDKAGKESEDREQEQDREPRQ. Position 831 is a phosphoserine (Ser-831). A Glycyl lysine isopeptide (Lys-Gly) (interchain with G-Cter in SUMO2) cross-link involves residue Lys-837. Ser-851 carries the post-translational modification Phosphoserine.

Belongs to the PRPF40 family. Interacts with the N-terminus of HD.

It is found in the nucleus speckle. In terms of biological role, may be involved in pre-mRNA splicing. The sequence is that of Pre-mRNA-processing factor 40 homolog B (Prpf40b) from Mus musculus (Mouse).